A 218-amino-acid chain; its full sequence is Elongation factor Ts (218 aa).

Residues 82-85 are involved in Mg(2+) ion dislocation from EF-Tu; the sequence is TDFV.

The protein belongs to the EF-Ts family.

It localises to the cytoplasm. Its function is as follows. Associates with the EF-Tu.GDP complex and induces the exchange of GDP to GTP. It remains bound to the aminoacyl-tRNA.EF-Tu.GTP complex up to the GTP hydrolysis stage on the ribosome. The chain is Elongation factor Ts from Picosynechococcus sp. (strain ATCC 27264 / PCC 7002 / PR-6) (Agmenellum quadruplicatum).